Here is a 360-residue protein sequence, read N- to C-terminus: Phenylalanine--tRNA ligase alpha subunit (360 aa).

Glutamate 260 lines the Mg(2+) pocket.

Belongs to the class-II aminoacyl-tRNA synthetase family. Phe-tRNA synthetase alpha subunit type 1 subfamily. In terms of assembly, tetramer of two alpha and two beta subunits. Requires Mg(2+) as cofactor.

It is found in the cytoplasm. The catalysed reaction is tRNA(Phe) + L-phenylalanine + ATP = L-phenylalanyl-tRNA(Phe) + AMP + diphosphate + H(+). This is Phenylalanine--tRNA ligase alpha subunit from Bradyrhizobium sp. (strain BTAi1 / ATCC BAA-1182).